Consider the following 302-residue polypeptide: Sulfate adenylyltransferase subunit 2 (302 aa).

This sequence belongs to the PAPS reductase family. CysD subfamily. Heterodimer composed of CysD, the smaller subunit, and CysN.

It carries out the reaction sulfate + ATP + H(+) = adenosine 5'-phosphosulfate + diphosphate. It functions in the pathway sulfur metabolism; hydrogen sulfide biosynthesis; sulfite from sulfate: step 1/3. In terms of biological role, with CysN forms the ATP sulfurylase (ATPS) that catalyzes the adenylation of sulfate producing adenosine 5'-phosphosulfate (APS) and diphosphate, the first enzymatic step in sulfur assimilation pathway. APS synthesis involves the formation of a high-energy phosphoric-sulfuric acid anhydride bond driven by GTP hydrolysis by CysN coupled to ATP hydrolysis by CysD. In Klebsiella pneumoniae (strain 342), this protein is Sulfate adenylyltransferase subunit 2.